The primary structure comprises 290 residues: Probable branched-chain-amino-acid aminotransferase (290 aa).

Lys155 bears the N6-(pyridoxal phosphate)lysine mark.

This sequence belongs to the class-IV pyridoxal-phosphate-dependent aminotransferase family. Pyridoxal 5'-phosphate serves as cofactor.

It carries out the reaction L-leucine + 2-oxoglutarate = 4-methyl-2-oxopentanoate + L-glutamate. The catalysed reaction is L-isoleucine + 2-oxoglutarate = (S)-3-methyl-2-oxopentanoate + L-glutamate. It catalyses the reaction L-valine + 2-oxoglutarate = 3-methyl-2-oxobutanoate + L-glutamate. The protein operates within amino-acid biosynthesis; L-isoleucine biosynthesis; L-isoleucine from 2-oxobutanoate: step 4/4. Its pathway is amino-acid biosynthesis; L-leucine biosynthesis; L-leucine from 3-methyl-2-oxobutanoate: step 4/4. It functions in the pathway amino-acid biosynthesis; L-valine biosynthesis; L-valine from pyruvate: step 4/4. Its function is as follows. Acts on leucine, isoleucine and valine. The sequence is that of Probable branched-chain-amino-acid aminotransferase (ilvE) from Rickettsia felis (strain ATCC VR-1525 / URRWXCal2) (Rickettsia azadi).